Consider the following 70-residue polypeptide: Large ribosomal subunit protein bL31 (70 aa).

C16, C18, C37, and C40 together coordinate Zn(2+).

Belongs to the bacterial ribosomal protein bL31 family. Type A subfamily. In terms of assembly, part of the 50S ribosomal subunit. Requires Zn(2+) as cofactor.

In terms of biological role, binds the 23S rRNA. The protein is Large ribosomal subunit protein bL31 of Shewanella frigidimarina (strain NCIMB 400).